We begin with the raw amino-acid sequence, 488 residues long: Protein nucleotidyltransferase YdiU (488 aa).

Gly-91, Gly-93, Arg-94, Lys-114, Asp-126, Gly-127, Arg-177, and Arg-184 together coordinate ATP. Asp-253 serves as the catalytic Proton acceptor. The Mg(2+) site is built by Asn-254 and Asp-263. Residue Asp-263 coordinates ATP.

The protein belongs to the SELO family. Requires Mg(2+) as cofactor. The cofactor is Mn(2+).

It catalyses the reaction L-seryl-[protein] + ATP = 3-O-(5'-adenylyl)-L-seryl-[protein] + diphosphate. It carries out the reaction L-threonyl-[protein] + ATP = 3-O-(5'-adenylyl)-L-threonyl-[protein] + diphosphate. The catalysed reaction is L-tyrosyl-[protein] + ATP = O-(5'-adenylyl)-L-tyrosyl-[protein] + diphosphate. The enzyme catalyses L-histidyl-[protein] + UTP = N(tele)-(5'-uridylyl)-L-histidyl-[protein] + diphosphate. It catalyses the reaction L-seryl-[protein] + UTP = O-(5'-uridylyl)-L-seryl-[protein] + diphosphate. It carries out the reaction L-tyrosyl-[protein] + UTP = O-(5'-uridylyl)-L-tyrosyl-[protein] + diphosphate. Nucleotidyltransferase involved in the post-translational modification of proteins. It can catalyze the addition of adenosine monophosphate (AMP) or uridine monophosphate (UMP) to a protein, resulting in modifications known as AMPylation and UMPylation. This Bacillus cereus (strain ATCC 10987 / NRS 248) protein is Protein nucleotidyltransferase YdiU.